A 496-amino-acid polypeptide reads, in one-letter code: Probable malate:quinone oxidoreductase (496 aa).

It belongs to the MQO family. FAD is required as a cofactor.

It catalyses the reaction (S)-malate + a quinone = a quinol + oxaloacetate. Its pathway is carbohydrate metabolism; tricarboxylic acid cycle; oxaloacetate from (S)-malate (quinone route): step 1/1. This is Probable malate:quinone oxidoreductase from Prochlorococcus marinus (strain NATL2A).